Here is a 40-residue protein sequence, read N- to C-terminus: Photosystem II reaction center protein J (40 aa).

The chain crosses the membrane as a helical span at residues 10 to 30 (LWIIGTVTGILVIGLIGIFFF).

This sequence belongs to the PsbJ family. PSII is composed of 1 copy each of membrane proteins PsbA, PsbB, PsbC, PsbD, PsbE, PsbF, PsbH, PsbI, PsbJ, PsbK, PsbL, PsbM, PsbT, PsbX, PsbY, PsbZ, Psb30/Ycf12, at least 3 peripheral proteins of the oxygen-evolving complex and a large number of cofactors. It forms dimeric complexes.

It localises to the plastid membrane. Its function is as follows. One of the components of the core complex of photosystem II (PSII). PSII is a light-driven water:plastoquinone oxidoreductase that uses light energy to abstract electrons from H(2)O, generating O(2) and a proton gradient subsequently used for ATP formation. It consists of a core antenna complex that captures photons, and an electron transfer chain that converts photonic excitation into a charge separation. The protein is Photosystem II reaction center protein J of Cuscuta exaltata (Tall dodder).